Consider the following 186-residue polypeptide: MPKPTKGPRLGGSSSHQKALLANLATSLFEHGRIKTTEPKARALRPYAEKLITHAKKGALHNRREVLKKIRDKDVVHVLFEEIGPFFADRNGGYTRIIKVEPRKGDNAPMAVIELVREKTVTSEADRARRVKASKKAPEAAAAAPQAAVEPEAVEAAPAPDAPEAAPEAEAAAPQPADEAEGSSED.

Residues 123–186 form a disordered region; the sequence is SEADRARRVK…ADEAEGSSED (64 aa). A compositionally biased stretch (low complexity) spans 139 to 177; it reads EAAAAAPQAAVEPEAVEAAPAPDAPEAAPEAEAAAPQPA.

It belongs to the bacterial ribosomal protein bL17 family. Part of the 50S ribosomal subunit. Contacts protein L32.

This chain is Large ribosomal subunit protein bL17, found in Mycobacterium avium (strain 104).